Here is a 201-residue protein sequence, read N- to C-terminus: Ras-related protein Rab-9B (201 aa).

GTP is bound by residues Val18, Gly19, Lys20, Ser21, Ser22, Asp33, Ser34, Ala36, His38, and Thr39. Ser21 provides a ligand contact to Mg(2+). The Switch 1 motif lies at 31 to 42 (KFDSQAFHTIGV). Ser34 carries the phosphoserine modification. Mg(2+) contacts are provided by Thr39 and Asp62. A Switch 2 motif is present at residues 64–78 (AGQERFKSLRTPFYR). Residues Gly65, Asn124, Lys125, Ala155, and Lys156 each contribute to the GTP site. 2 S-geranylgeranyl cysteine lipidation sites follow: Cys200 and Cys201.

The protein belongs to the small GTPase superfamily. Rab family. As to quaternary structure, interacts (GTP-bound form) with SGSM1; the GDP-bound form has much lower affinity for SGSM1. The GTP-bound form but not the GDP-bound form interacts with HPS4 and the BLOC-3 complex (heterodimer of HPS1 and HPS4) but does not interact with HPS1 alone. Interacts (GTP-bound form) with NDE1. Mg(2+) is required as a cofactor. In terms of tissue distribution, ubiquitous.

The protein resides in the cell membrane. It is found in the cytoplasmic vesicle. It localises to the phagosome. Its subcellular location is the phagosome membrane. The catalysed reaction is GTP + H2O = GDP + phosphate + H(+). Its activity is regulated as follows. Regulated by guanine nucleotide exchange factors (GEFs) which promote the exchange of bound GDP for free GTP. Regulated by GTPase activating proteins (GAPs) which increase the GTP hydrolysis activity. Inhibited by GDP dissociation inhibitors (GDIs). Functionally, the small GTPases Rab are key regulators of intracellular membrane trafficking, from the formation of transport vesicles to their fusion with membranes. Rabs cycle between an inactive GDP-bound form and an active GTP-bound form that is able to recruit to membranes different sets of downstream effectors directly responsible for vesicle formation, movement, tethering and fusion. RAB9B is involved in the transport of proteins between the endosomes and the trans Golgi network. May use NDE1/NDEL1 as an effector to interact with the dynein motor complex in order to control retrograde trafficking of RAB9-associated late endosomes to the TGN. This Homo sapiens (Human) protein is Ras-related protein Rab-9B.